Consider the following 259-residue polypeptide: uncharacterized protein (259 aa).

The signal sequence occupies residues 1–22 (MKHSKKLLLCISFLLITVFISG). Cysteine 23 is lipidated: N-palmitoyl cysteine. Cysteine 23 carries S-diacylglycerol cysteine lipidation.

The protein belongs to the staphylococcal tandem lipoprotein family.

The protein resides in the cell membrane. This is an uncharacterized protein from Staphylococcus epidermidis (strain ATCC 35984 / DSM 28319 / BCRC 17069 / CCUG 31568 / BM 3577 / RP62A).